A 303-amino-acid polypeptide reads, in one-letter code: Eukaryotic translation initiation factor 3 subunit F (303 aa).

Positions 1–10 (MSLDTSSSAI) are enriched in polar residues. The tract at residues 1–25 (MSLDTSSSAIHLQLPPTSSSLRPPS) is disordered. The segment covering 12 to 25 (LQLPPTSSSLRPPS) has biased composition (low complexity). Positions 27–165 (ITVHPSVIAQ…VKGWVSQPLG (139 aa)) constitute an MPN domain.

It belongs to the eIF-3 subunit F family. Component of the eukaryotic translation initiation factor 3 (eIF-3) complex.

Its subcellular location is the cytoplasm. Functionally, component of the eukaryotic translation initiation factor 3 (eIF-3) complex, which is involved in protein synthesis of a specialized repertoire of mRNAs and, together with other initiation factors, stimulates binding of mRNA and methionyl-tRNAi to the 40S ribosome. The eIF-3 complex specifically targets and initiates translation of a subset of mRNAs involved in cell proliferation. This chain is Eukaryotic translation initiation factor 3 subunit F, found in Cryptococcus neoformans var. neoformans serotype D (strain B-3501A) (Filobasidiella neoformans).